A 281-amino-acid polypeptide reads, in one-letter code: uncharacterized protein (281 aa).

Transmembrane regions (helical) follow at residues 30-50 (AIVA…FIVI), 54-74 (VFIS…GYYF), 76-96 (FNPL…MGWV), 106-126 (TLIG…IDLT), 153-173 (AGLD…FLAI), 198-218 (IALT…IALL), 235-255 (MMAV…ALSY), and 259-279 (LSSG…SLAF).

The protein belongs to the ABC-3 integral membrane protein family.

It localises to the cell membrane. This is an uncharacterized protein from Synechocystis sp. (strain ATCC 27184 / PCC 6803 / Kazusa).